Here is a 314-residue protein sequence, read N- to C-terminus: Ribosomal RNA small subunit methyltransferase H (314 aa).

S-adenosyl-L-methionine is bound by residues 34-36 (GGH), Asp53, Phe82, Asp103, and Gln110.

This sequence belongs to the methyltransferase superfamily. RsmH family.

It is found in the cytoplasm. The catalysed reaction is cytidine(1402) in 16S rRNA + S-adenosyl-L-methionine = N(4)-methylcytidine(1402) in 16S rRNA + S-adenosyl-L-homocysteine + H(+). In terms of biological role, specifically methylates the N4 position of cytidine in position 1402 (C1402) of 16S rRNA. This Levilactobacillus brevis (strain ATCC 367 / BCRC 12310 / CIP 105137 / JCM 1170 / LMG 11437 / NCIMB 947 / NCTC 947) (Lactobacillus brevis) protein is Ribosomal RNA small subunit methyltransferase H.